A 308-amino-acid chain; its full sequence is Taste receptor type 2 member 43 (308 aa).

Met1 is a topological domain (extracellular). Residues 2-22 form a helical membrane-spanning segment; sequence ITFLPIIFSILVVFTFVIGNF. Topologically, residues 23-46 are cytoplasmic; sequence ANGFIALVNSIEWVKRQKISFADQ. The helical transmembrane segment at 47 to 67 threads the bilayer; that stretch reads ILTALAVSRVGLLWILLLNWY. Topologically, residues 68 to 86 are extracellular; the sequence is STVLNPAFYSVEVRTIAYN. The helical transmembrane segment at 87–107 threads the bilayer; it reads LWAVINHFSNWLATSLSIFYL. The Cytoplasmic portion of the chain corresponds to 108–126; it reads LKIANFSNLIFLHLRRRVK. Residues 127-147 traverse the membrane as a helical segment; it reads SVVLVILWGPLLFLVCHLFVV. Residues 148–178 are Extracellular-facing; sequence NMNEIIQTKEYEGNMTWKSKLRSAMYLSNTT. N-linked (GlcNAc...) asparagine glycosylation is found at Asn161 and Asn176. Residues 179–199 form a helical membrane-spanning segment; sequence VTILANLVPFILTLISFLLLI. Topologically, residues 200 to 229 are cytoplasmic; the sequence is CSLCKHLKKMQLRDKGSQDPSTKVHIKALQ. The chain crosses the membrane as a helical span at residues 230–249; the sequence is TVISLSLCAIYFLSIMISSW. At 250–258 the chain is on the extracellular side; the sequence is SLGRVENKA. A helical transmembrane segment spans residues 259 to 279; sequence IFMFCKAIRFSYPSAHAFILI. Residues 280 to 308 lie on the Cytoplasmic side of the membrane; sequence WGNKKLKQTLLSVLWNVRYCVKGQKLQSP.

This sequence belongs to the G-protein coupled receptor T2R family.

The protein localises to the membrane. It localises to the cell projection. It is found in the cilium membrane. Gustducin-coupled receptor immplicated in the perception of bitter compounds in the oral cavity and the gastrointestinal tract. Signals through PLCB2 and the calcium-regulated cation channel TRPM5. Activated by the sulfonyl amide sweeteners saccharin and acesulfame K. In airway epithelial cells, binding of bitter compounds increases the intracellular calcium ion concentration and stimulates ciliary beat frequency. May act as chemosensory receptors in airway epithelial cells to detect and eliminate potential noxious agents from the airways. The protein is Taste receptor type 2 member 43 (TAS2R43) of Macaca mulatta (Rhesus macaque).